The chain runs to 218 residues: Large ribosomal subunit protein uL3 (218 aa).

Residues 132–152 (FKGQGASHGTQAVHRRPGSIG) are disordered.

Belongs to the universal ribosomal protein uL3 family. In terms of assembly, part of the 50S ribosomal subunit. Forms a cluster with proteins L14 and L19.

Functionally, one of the primary rRNA binding proteins, it binds directly near the 3'-end of the 23S rRNA, where it nucleates assembly of the 50S subunit. In Rhodococcus erythropolis (strain PR4 / NBRC 100887), this protein is Large ribosomal subunit protein uL3.